The primary structure comprises 341 residues: Glycerol-3-phosphate dehydrogenase [NAD(P)+] (341 aa).

Serine 13, tryptophan 14, and lysine 108 together coordinate NADPH. The sn-glycerol 3-phosphate site is built by lysine 108, glycine 139, and serine 141. Position 143 (alanine 143) interacts with NADPH. Positions 194, 247, 257, 258, and 259 each coordinate sn-glycerol 3-phosphate. Lysine 194 acts as the Proton acceptor in catalysis. Arginine 258 is a binding site for NADPH. NADPH-binding residues include valine 282 and glutamate 284.

It belongs to the NAD-dependent glycerol-3-phosphate dehydrogenase family.

It is found in the cytoplasm. The enzyme catalyses sn-glycerol 3-phosphate + NAD(+) = dihydroxyacetone phosphate + NADH + H(+). The catalysed reaction is sn-glycerol 3-phosphate + NADP(+) = dihydroxyacetone phosphate + NADPH + H(+). It functions in the pathway membrane lipid metabolism; glycerophospholipid metabolism. In terms of biological role, catalyzes the reduction of the glycolytic intermediate dihydroxyacetone phosphate (DHAP) to sn-glycerol 3-phosphate (G3P), the key precursor for phospholipid synthesis. This chain is Glycerol-3-phosphate dehydrogenase [NAD(P)+], found in Lactococcus lactis subsp. lactis (strain IL1403) (Streptococcus lactis).